An 80-amino-acid chain; its full sequence is Exodeoxyribonuclease 7 small subunit (80 aa).

Belongs to the XseB family. Heterooligomer composed of large and small subunits.

The protein localises to the cytoplasm. The enzyme catalyses Exonucleolytic cleavage in either 5'- to 3'- or 3'- to 5'-direction to yield nucleoside 5'-phosphates.. Functionally, bidirectionally degrades single-stranded DNA into large acid-insoluble oligonucleotides, which are then degraded further into small acid-soluble oligonucleotides. The chain is Exodeoxyribonuclease 7 small subunit from Enterobacter sp. (strain 638).